We begin with the raw amino-acid sequence, 853 residues long: DNA mismatch repair protein MutS (853 aa).

614-621 is a binding site for ATP; it reads GPNMGGKS.

This sequence belongs to the DNA mismatch repair MutS family.

In terms of biological role, this protein is involved in the repair of mismatches in DNA. It is possible that it carries out the mismatch recognition step. This protein has a weak ATPase activity. This is DNA mismatch repair protein MutS from Escherichia coli O157:H7 (strain EC4115 / EHEC).